We begin with the raw amino-acid sequence, 313 residues long: 4-hydroxyproline 2-epimerase (313 aa).

The disordered stretch occupies residues 1–23 (MHVIDSHTGGEPTRVILSGGPHL). The Proton acceptor role is filled by C85. Residues 86–87 (GH), H205, and D231 each bind substrate. The active-site Proton donor is the C235. 236–237 (GT) provides a ligand contact to substrate.

Belongs to the proline racemase family.

It catalyses the reaction trans-4-hydroxy-L-proline = cis-4-hydroxy-D-proline. Catalyzes the epimerization of trans-4-hydroxy-L-proline (t4LHyp) to cis-4-hydroxy-D-proline (c4DHyp). Is likely involved in a degradation pathway that converts t4LHyp to alpha-ketoglutarate. Displays no proline racemase activity. This is 4-hydroxyproline 2-epimerase from Ruegeria pomeroyi (strain ATCC 700808 / DSM 15171 / DSS-3) (Silicibacter pomeroyi).